Consider the following 101-residue polypeptide: Protein Tat (101 aa).

A compositionally biased stretch (basic and acidic residues) spans 1–12; sequence MEPVDPRLEPWK. Residues 1-20 form a disordered region; sequence MEPVDPRLEPWKHPGSQPKT. The interaction with human CREBBP stretch occupies residues 1-24; sequence MEPVDPRLEPWKHPGSQPKTACTT. The tract at residues 1–48 is transactivation; sequence MEPVDPRLEPWKHPGSQPKTACTTCYCKKCCFHCQVCFTKKALGISYG. Zn(2+) contacts are provided by cysteine 22, cysteine 25, and cysteine 27. Residues 22–37 form a cysteine-rich region; sequence CTTCYCKKCCFHCQVC. An N6-acetyllysine; by host PCAF modification is found at lysine 28. Cysteine 30, histidine 33, cysteine 34, and cysteine 37 together coordinate Zn(2+). A core region spans residues 38-48; the sequence is FTKKALGISYG. Residues 47-101 form a disordered region; sequence YGRKKRRQRRRAPEDSQTHQVSLPKQPAPQFRGDPTGPKESKKKVERETETHPVD. A Nuclear localization signal, RNA-binding (TAR), and protein transduction motif is present at residues 49 to 57; the sequence is RKKRRQRRR. Positions 49–86 are interaction with the host capping enzyme RNGTT; sequence RKKRRQRRRAPEDSQTHQVSLPKQPAPQFRGDPTGPKE. An N6-acetyllysine; by host EP300 and GCN5L2 mark is found at lysine 50 and lysine 51. Residues arginine 52 and arginine 53 each carry the asymmetric dimethylarginine; by host PRMT6 modification. Lysine 71 participates in a covalent cross-link: Glycyl lysine isopeptide (Lys-Gly) (interchain with G-Cter in ubiquitin). The Cell attachment site signature appears at 78–80; that stretch reads RGD. Residues 83 to 101 are compositionally biased toward basic and acidic residues; sequence GPKESKKKVERETETHPVD.

It belongs to the lentiviruses Tat family. In terms of assembly, interacts with host CCNT1. Associates with the P-TEFb complex composed at least of Tat, P-TEFb (CDK9 and CCNT1), TAR RNA, RNA Pol II. Recruits the HATs CREBBP, TAF1/TFIID, EP300, PCAF and GCN5L2. Interacts with host KAT5/Tip60; this interaction targets the latter to degradation. Interacts with the host deacetylase SIRT1. Interacts with host capping enzyme RNGTT; this interaction stimulates RNGTT. Binds to host KDR, and to the host integrins ITGAV/ITGB3 and ITGA5/ITGB1. Interacts with host KPNB1/importin beta-1 without previous binding to KPNA1/importin alpha-1. Interacts with EIF2AK2. Interacts with host nucleosome assembly protein NAP1L1; this interaction may be required for the transport of Tat within the nucleus, since the two proteins interact at the nuclear rim. Interacts with host C1QBP/SF2P32; this interaction involves lysine-acetylated Tat. Interacts with the host chemokine receptors CCR2, CCR3 and CXCR4. Interacts with host DPP4/CD26; this interaction may trigger an anti-proliferative effect. Interacts with host LDLR. Interacts with the host extracellular matrix metalloproteinase MMP1. Interacts with host PRMT6; this interaction mediates Tat's methylation. Interacts with, and is ubiquitinated by MDM2/Hdm2. Interacts with host PSMC3 and HTATIP2. Interacts with STAB1; this interaction may overcome SATB1-mediated repression of IL2 and IL2RA (interleukin) in T cells by binding to the same domain than HDAC1. Interacts (when acetylated) with human CDK13, thereby increasing HIV-1 mRNA splicing and promoting the production of the doubly spliced HIV-1 protein Nef. Interacts with host TBP; this interaction modulates the activity of transcriptional pre-initiation complex. Interacts with host RELA. Interacts with host PLSCR1; this interaction negatively regulates Tat transactivation activity by altering its subcellular distribution. Post-translationally, asymmetrical arginine methylation by host PRMT6 seems to diminish the transactivation capacity of Tat and affects the interaction with host CCNT1. In terms of processing, acetylation by EP300, CREBBP, GCN5L2/GCN5 and PCAF regulates the transactivation activity of Tat. EP300-mediated acetylation of Lys-50 promotes dissociation of Tat from the TAR RNA through the competitive binding to PCAF's bromodomain. In addition, the non-acetylated Tat's N-terminus can also interact with PCAF. PCAF-mediated acetylation of Lys-28 enhances Tat's binding to CCNT1. Lys-50 is deacetylated by SIRT1. Polyubiquitination by host MDM2 does not target Tat to degradation, but activates its transactivation function and fosters interaction with CCNT1 and TAR RNA. Post-translationally, phosphorylated by EIF2AK2 on serine and threonine residues adjacent to the basic region important for TAR RNA binding and function. Phosphorylation of Tat by EIF2AK2 is dependent on the prior activation of EIF2AK2 by dsRNA.

It is found in the host nucleus. The protein resides in the host nucleolus. Its subcellular location is the host cytoplasm. It localises to the secreted. Functionally, transcriptional activator that increases RNA Pol II processivity, thereby increasing the level of full-length viral transcripts. Recognizes a hairpin structure at the 5'-LTR of the nascent viral mRNAs referred to as the transactivation responsive RNA element (TAR) and recruits the cyclin T1-CDK9 complex (P-TEFb complex) that will in turn hyperphosphorylate the RNA polymerase II to allow efficient elongation. The CDK9 component of P-TEFb and other Tat-activated kinases hyperphosphorylate the C-terminus of RNA Pol II that becomes stabilized and much more processive. Other factors such as HTATSF1/Tat-SF1, SUPT5H/SPT5, and HTATIP2 are also important for Tat's function. Besides its effect on RNA Pol II processivity, Tat induces chromatin remodeling of proviral genes by recruiting the histone acetyltransferases (HATs) CREBBP, EP300 and PCAF to the chromatin. This also contributes to the increase in proviral transcription rate, especially when the provirus integrates in transcriptionally silent region of the host genome. To ensure maximal activation of the LTR, Tat mediates nuclear translocation of NF-kappa-B by interacting with host RELA. Through its interaction with host TBP, Tat may also modulate transcription initiation. Tat can reactivate a latently infected cell by penetrating in it and transactivating its LTR promoter. In the cytoplasm, Tat is thought to act as a translational activator of HIV-1 mRNAs. Extracellular circulating Tat can be endocytosed by surrounding uninfected cells via the binding to several surface receptors such as CD26, CXCR4, heparan sulfate proteoglycans (HSPG) or LDLR. Neurons are rarely infected, but they internalize Tat via their LDLR. Through its interaction with nuclear HATs, Tat is potentially able to control the acetylation-dependent cellular gene expression. Modulates the expression of many cellular genes involved in cell survival, proliferation or in coding for cytokines or cytokine receptors. Tat plays a role in T-cell and neurons apoptosis. Tat induced neurotoxicity and apoptosis probably contribute to neuroAIDS. Circulating Tat also acts as a chemokine-like and/or growth factor-like molecule that binds to specific receptors on the surface of the cells, affecting many cellular pathways. In the vascular system, Tat binds to ITGAV/ITGB3 and ITGA5/ITGB1 integrins dimers at the surface of endothelial cells and competes with bFGF for heparin-binding sites, leading to an excess of soluble bFGF. The protein is Protein Tat of Human immunodeficiency virus type 1 group M subtype B (isolate MN) (HIV-1).